A 426-amino-acid chain; its full sequence is Serine--tRNA ligase (426 aa).

Residue 233–235 coordinates L-serine; that stretch reads TAE. 264-266 contacts ATP; the sequence is RRE. Residue glutamate 287 coordinates L-serine. 351-354 contributes to the ATP binding site; the sequence is EISS. Serine 386 is an L-serine binding site.

Belongs to the class-II aminoacyl-tRNA synthetase family. Type-1 seryl-tRNA synthetase subfamily. As to quaternary structure, homodimer. The tRNA molecule binds across the dimer.

It localises to the cytoplasm. The enzyme catalyses tRNA(Ser) + L-serine + ATP = L-seryl-tRNA(Ser) + AMP + diphosphate + H(+). It catalyses the reaction tRNA(Sec) + L-serine + ATP = L-seryl-tRNA(Sec) + AMP + diphosphate + H(+). It functions in the pathway aminoacyl-tRNA biosynthesis; selenocysteinyl-tRNA(Sec) biosynthesis; L-seryl-tRNA(Sec) from L-serine and tRNA(Sec): step 1/1. Catalyzes the attachment of serine to tRNA(Ser). Is also able to aminoacylate tRNA(Sec) with serine, to form the misacylated tRNA L-seryl-tRNA(Sec), which will be further converted into selenocysteinyl-tRNA(Sec). The chain is Serine--tRNA ligase from Thermosipho africanus (strain TCF52B).